The following is a 142-amino-acid chain: Hemoglobin subunit alpha-A (142 aa).

The Globin domain occupies 2–142; sequence VLSAADKNNV…VGTVLTAKYR (141 aa). H59 is a binding site for O2. H88 contacts heme b.

Belongs to the globin family. Heterotetramer of two alpha chains and two beta chains. In terms of tissue distribution, red blood cells.

Its function is as follows. Involved in oxygen transport from the lung to the various peripheral tissues. In Meleagris gallopavo (Wild turkey), this protein is Hemoglobin subunit alpha-A (HBAA).